The primary structure comprises 48 residues: Large ribosomal subunit protein bL33A (48 aa).

The protein belongs to the bacterial ribosomal protein bL33 family.

In Streptococcus pyogenes serotype M28 (strain MGAS6180), this protein is Large ribosomal subunit protein bL33A.